Consider the following 231-residue polypeptide: Lipid A acyltransferase PagP (231 aa).

The first 23 residues, 1–23 (MNKLTVRNFIVGLLIVFSLNSFS), serve as a signal peptide directing secretion. The segment covering 24–43 (SPPSISNSSSNSIDENSPIN) has biased composition (low complexity). A disordered region spans residues 24–59 (SPPSISNSSSNSIDENSPINTFKISPDNQTSKKSDL). Catalysis depends on residues H100, D145, and S146.

This sequence belongs to the lipid A palmitoyltransferase family. Homodimer.

Its subcellular location is the cell outer membrane. The enzyme catalyses a lipid A + a 1,2-diacyl-sn-glycero-3-phosphocholine = a hepta-acyl lipid A + a 2-acyl-sn-glycero-3-phosphocholine. It carries out the reaction a lipid IVA + a 1,2-diacyl-sn-glycero-3-phosphocholine = a lipid IVB + a 2-acyl-sn-glycero-3-phosphocholine. It catalyses the reaction a lipid IIA + a 1,2-diacyl-sn-glycero-3-phosphocholine = a lipid IIB + a 2-acyl-sn-glycero-3-phosphocholine. Functionally, transfers a fatty acid residue from the sn-1 position of a phospholipid to the N-linked hydroxyfatty acid chain on the proximal unit of lipid A or its precursors. In Legionella longbeachae serogroup 1 (strain NSW150), this protein is Lipid A acyltransferase PagP.